A 59-amino-acid polypeptide reads, in one-letter code: Putative potassium channel toxin Ts22 (59 aa).

Residues 1 to 22 form the signal peptide; sequence MKAFYGILIIFILISMIDLSQQ. Disulfide bonds link Cys29–Cys50, Cys35–Cys55, and Cys39–Cys57.

This sequence belongs to the short scorpion toxin superfamily. Potassium channel inhibitor family. Alpha-KTx 04 subfamily. In terms of tissue distribution, expressed by the venom gland.

It localises to the secreted. In terms of biological role, potently blocks voltage-gated potassium channels (Kv). The polypeptide is Putative potassium channel toxin Ts22 (Tityus serrulatus (Brazilian scorpion)).